A 525-amino-acid polypeptide reads, in one-letter code: Ribosomal protein uS12 methylthiotransferase RimO (525 aa).

Residues 1–20 (MPKISTESVNTTIAPSQPAS) are compositionally biased toward polar residues. Positions 1-44 (MPKISTESVNTTIAPSQPASTAPKDTATLFNPAKPTATPAQSSI) are disordered. The region spanning 82 to 192 (PKIGFVSLGC…VIRAVALHVP (111 aa)) is the MTTase N-terminal domain. Residues C91, C127, C156, C230, C234, and C237 each coordinate [4Fe-4S] cluster. One can recognise a Radical SAM core domain in the interval 216–453 (LTPSHYAYLK…MTLQQDISAQ (238 aa)). Residues 456–525 (QEKIGKTLMV…EYDLFASYQA (70 aa)) enclose the TRAM domain.

This sequence belongs to the methylthiotransferase family. RimO subfamily. [4Fe-4S] cluster serves as cofactor.

It localises to the cytoplasm. It catalyses the reaction L-aspartate(89)-[ribosomal protein uS12]-hydrogen + (sulfur carrier)-SH + AH2 + 2 S-adenosyl-L-methionine = 3-methylsulfanyl-L-aspartate(89)-[ribosomal protein uS12]-hydrogen + (sulfur carrier)-H + 5'-deoxyadenosine + L-methionine + A + S-adenosyl-L-homocysteine + 2 H(+). Its function is as follows. Catalyzes the methylthiolation of an aspartic acid residue of ribosomal protein uS12. This chain is Ribosomal protein uS12 methylthiotransferase RimO, found in Psychrobacter arcticus (strain DSM 17307 / VKM B-2377 / 273-4).